Reading from the N-terminus, the 401-residue chain is Formate dehydrogenase (401 aa).

2 residues coordinate substrate: Ile-123 and Asn-147. NAD(+) contacts are provided by residues Ser-148, 202-203, Asp-222, 257-261, Thr-283, Asp-309, 333-336, and Ser-381; these read RI, PLHPE, and HISG.

It belongs to the D-isomer specific 2-hydroxyacid dehydrogenase family. FDH subfamily. As to quaternary structure, homodimer.

Its subcellular location is the cytoplasm. It carries out the reaction formate + NAD(+) = CO2 + NADH. Catalyzes the NAD(+)-dependent oxidation of formate to carbon dioxide. Formate oxidation is the final step in the methanol oxidation pathway in methylotrophic microorganisms. Has a role in the detoxification of exogenous formate in non-methylotrophic organisms. The protein is Formate dehydrogenase of Pseudomonas sp. (strain 101) (Achromobacter parvulus T1).